We begin with the raw amino-acid sequence, 366 residues long: Chitoporin (366 aa).

A signal peptide spans 1 to 23 (MDKMFKRTVIGAAVALASTGLMA).

The protein belongs to the Gram-negative porin family.

It is found in the cell outer membrane. In terms of biological role, involved in the uptake of chitosugars. The chain is Chitoporin (chiP) from Vibrio furnissii.